A 1770-amino-acid chain; its full sequence is Transposon Ty2-DR3 Gag-Pol polyprotein (1770 aa).

Composition is skewed to polar residues over residues 1–11, 19–39, 49–60, 366–390, 399–408, and 415–435; these read MESQQLHQNPH, ASVT…SASN, KVNSQQETTPGT, VSRT…NSSK, IATSSKFSRV, and ESTV…GQQQ. Disordered stretches follow at residues 1–89 and 355–449; these read MESQ…QQHG and SQYK…SNDE. The interval 295-397 is RNA-binding; the sequence is ENNINVSDRL…SSKPRAAKAH (103 aa). Asp-457 functions as the For protease activity; shared with dimeric partner in the catalytic mechanism. Positions 579–636 are integrase-type zinc finger-like; it reads NVNKSKSVNKYPYPLIHRMLGHANFRSIQKSLKKNAVTYLKESDIEWSNASTYQCPDC. Residues 656 to 831 enclose the Integrase catalytic domain; that stretch reads ESYEPFQYLH…AGLDITTILP (176 aa). Mg(2+) is bound by residues Asp-667 and Asp-732. 2 disordered regions span residues 1005–1038 and 1057–1205; these read GGTI…MIDL and GGTE…TEIE. Polar residues-rich tracts occupy residues 1009–1024 and 1065–1082; these read ESDT…FTAR and QRNS…STPS. Residues 1193–1227 carry the Bipartite nuclear localization signal motif; it reads KKRSLEDNETEIEVSRDTWNNKNMRSLEPPRSKKR. A Reverse transcriptase Ty1/copia-type domain is found at 1353-1491; it reads NDYYITQLDI…DILGLEIKYQ (139 aa). Mg(2+)-binding residues include Asp-1361, Asp-1442, Asp-1443, Asp-1625, Glu-1667, and Asp-1700. Positions 1625 to 1767 constitute an RNase H Ty1/copia-type domain; that stretch reads DASYGNQPYY…IKTFKLLTNK (143 aa).

The capsid protein forms a homotrimer, from which the VLPs are assembled. The protease is a homodimer, whose active site consists of two apposed aspartic acid residues. Post-translationally, initially, virus-like particles (VLPs) are composed of the structural unprocessed proteins Gag and Gag-Pol, and also contain the host initiator methionine tRNA (tRNA(i)-Met) which serves as a primer for minus-strand DNA synthesis, and a dimer of genomic Ty RNA. Processing of the polyproteins occurs within the particle and proceeds by an ordered pathway, called maturation. First, the protease (PR) is released by autocatalytic cleavage of the Gag-Pol polyprotein, and this cleavage is a prerequisite for subsequent processing at the remaining sites to release the mature structural and catalytic proteins. Maturation takes place prior to the RT reaction and is required to produce transposition-competent VLPs.

The protein localises to the cytoplasm. Its subcellular location is the nucleus. The enzyme catalyses DNA(n) + a 2'-deoxyribonucleoside 5'-triphosphate = DNA(n+1) + diphosphate. It carries out the reaction Endonucleolytic cleavage to 5'-phosphomonoester.. Functionally, capsid protein (CA) is the structural component of the virus-like particle (VLP), forming the shell that encapsulates the retrotransposons dimeric RNA genome. The particles are assembled from trimer-clustered units and there are holes in the capsid shells that allow for the diffusion of macromolecules. CA also has nucleocapsid-like chaperone activity, promoting primer tRNA(i)-Met annealing to the multipartite primer-binding site (PBS), dimerization of Ty2 RNA and initiation of reverse transcription. Its function is as follows. The aspartyl protease (PR) mediates the proteolytic cleavages of the Gag and Gag-Pol polyproteins after assembly of the VLP. In terms of biological role, reverse transcriptase/ribonuclease H (RT) is a multifunctional enzyme that catalyzes the conversion of the retro-elements RNA genome into dsDNA within the VLP. The enzyme displays a DNA polymerase activity that can copy either DNA or RNA templates, and a ribonuclease H (RNase H) activity that cleaves the RNA strand of RNA-DNA heteroduplexes during plus-strand synthesis and hydrolyzes RNA primers. The conversion leads to a linear dsDNA copy of the retrotransposon that includes long terminal repeats (LTRs) at both ends. Integrase (IN) targets the VLP to the nucleus, where a subparticle preintegration complex (PIC) containing at least integrase and the newly synthesized dsDNA copy of the retrotransposon must transit the nuclear membrane. Once in the nucleus, integrase performs the integration of the dsDNA into the host genome. The chain is Transposon Ty2-DR3 Gag-Pol polyprotein (TY2B-DR3) from Saccharomyces cerevisiae (strain ATCC 204508 / S288c) (Baker's yeast).